The primary structure comprises 354 residues: UPF0283 membrane protein HI_0043 (354 aa).

3 helical membrane passes run 57 to 77, 87 to 107, and 211 to 231; these read LLKF…VQWI, IYLA…KEII, and ESAV…FIAW.

This sequence belongs to the UPF0283 family.

It localises to the cell inner membrane. This Haemophilus influenzae (strain ATCC 51907 / DSM 11121 / KW20 / Rd) protein is UPF0283 membrane protein HI_0043.